A 189-amino-acid chain; its full sequence is Xanthine phosphoribosyltransferase (189 aa).

2 residues coordinate xanthine: leucine 20 and asparagine 27. 128–132 lines the 5-phospho-alpha-D-ribose 1-diphosphate pocket; sequence ANGKA. Lysine 156 is a binding site for xanthine.

This sequence belongs to the purine/pyrimidine phosphoribosyltransferase family. Xpt subfamily. As to quaternary structure, homodimer.

Its subcellular location is the cytoplasm. The enzyme catalyses XMP + diphosphate = xanthine + 5-phospho-alpha-D-ribose 1-diphosphate. Its pathway is purine metabolism; XMP biosynthesis via salvage pathway; XMP from xanthine: step 1/1. In terms of biological role, converts the preformed base xanthine, a product of nucleic acid breakdown, to xanthosine 5'-monophosphate (XMP), so it can be reused for RNA or DNA synthesis. In Pseudomonas syringae pv. syringae (strain B728a), this protein is Xanthine phosphoribosyltransferase.